We begin with the raw amino-acid sequence, 83 residues long: Neurotoxin-1'' (83 aa).

The signal sequence occupies residues 1 to 19 (MNYLVMISLALLLMIGVES). Residues 21–82 (RDGYIVYPNN…PIKDTSRKCT (62 aa)) enclose the LCN-type CS-alpha/beta domain. Disulfide bonds link C31–C81, C35–C53, C39–C63, and C43–C65. A propeptide (removed by a carboxypeptidase (in neurotoxin-1/1')) is located at residue R83.

Belongs to the long (4 C-C) scorpion toxin superfamily. Sodium channel inhibitor family. Alpha subfamily. As to expression, expressed by the venom gland.

The protein localises to the secreted. In terms of biological role, alpha toxins bind voltage-independently at site-3 of sodium channels (Nav) and inhibit the inactivation of the activated channels, thereby blocking neuronal transmission. Is active against mammals and binds with high affinity rat brain synaptosomes. The sequence is that of Neurotoxin-1'' from Androctonus australis (Sahara scorpion).